Consider the following 384-residue polypeptide: UPF0284 protein alr0297 (384 aa).

Belongs to the UPF0284 family.

The protein is UPF0284 protein alr0297 of Nostoc sp. (strain PCC 7120 / SAG 25.82 / UTEX 2576).